A 449-amino-acid chain; its full sequence is NADH-quinone oxidoreductase subunit H (449 aa).

Helical transmembrane passes span Phe-26–Phe-46, Pro-96–Ile-116, Leu-136–Leu-156, Ile-177–Thr-197, Trp-211–Asn-231, Phe-259–Phe-279, Trp-298–Leu-318, Phe-330–Ala-350, and Trp-365–Gly-385. A disordered region spans residues Ala-396–Ser-449.

It belongs to the complex I subunit 1 family. In terms of assembly, NDH-1 is composed of 14 different subunits. Subunits NuoA, H, J, K, L, M, N constitute the membrane sector of the complex.

Its subcellular location is the cell membrane. The catalysed reaction is a quinone + NADH + 5 H(+)(in) = a quinol + NAD(+) + 4 H(+)(out). Functionally, NDH-1 shuttles electrons from NADH, via FMN and iron-sulfur (Fe-S) centers, to quinones in the respiratory chain. The immediate electron acceptor for the enzyme in this species is believed to be ubiquinone. Couples the redox reaction to proton translocation (for every two electrons transferred, four hydrogen ions are translocated across the cytoplasmic membrane), and thus conserves the redox energy in a proton gradient. This subunit may bind ubiquinone. This Frankia alni (strain DSM 45986 / CECT 9034 / ACN14a) protein is NADH-quinone oxidoreductase subunit H.